The primary structure comprises 439 residues: Hemagglutinin-esterase (439 aa).

Residues 1–22 (MGCMCIAMAPRTLLLLIGCQLV) form the signal peptide. Residues 12–132 (TLLLLIGCQL…DNKRWMGNKA (121 aa)) are esterase domain 1. Over 23 to 407 (FGFNEPLNIV…PVCIYDPLPV (385 aa)) the chain is Virion surface. Ser-45 (nucleophile) is an active-site residue. Cys-49 and Cys-70 are joined by a disulfide. Residues Asn-94, Asn-152, Asn-196, Asn-246, Asn-309, and Asn-316 are each glycosylated (N-linked (GlcNAc...) asparagine; by host). Cys-118 and Cys-167 are joined by a disulfide. The interval 133–281 (RFYARVYEKM…GNYKAVSLEY (149 aa)) is receptor binding. Cystine bridges form between Cys-202–Cys-291 and Cys-210–Cys-264. The esterase domain 2 stretch occupies residues 282-395 (LLSLPSKAIC…HCPTAANIGY (114 aa)). Cys-322 and Cys-327 form a disulfide bridge. N-linked (GlcNAc...) asparagine; by host glycosylation is present at Asn-331. Residues Asp-342 and His-345 each act as charge relay system in the active site. N-linked (GlcNAc...) asparagine; by host glycosylation is found at Asn-360 and Asn-374. Cys-363 and Cys-387 form a disulfide bridge. The chain crosses the membrane as a helical span at residues 408–428 (ILLGVLLGIAVLIIVFLMFYF). The Intravirion segment spans residues 429–439 (MTDSGVRLHEA).

This sequence belongs to the influenza type C/coronaviruses hemagglutinin-esterase family. Homodimer; disulfide-linked. Forms a complex with the M protein in the pre-Golgi. Associates then with S-M complex to form a ternary complex S-M-HE. In terms of processing, N-glycosylated in the host RER.

The protein localises to the virion membrane. It localises to the host cell membrane. The enzyme catalyses N-acetyl-9-O-acetylneuraminate + H2O = N-acetylneuraminate + acetate + H(+). The catalysed reaction is N-acetyl-4-O-acetylneuraminate + H2O = N-acetylneuraminate + acetate + H(+). Functionally, structural protein that makes short spikes at the surface of the virus. Contains receptor binding and receptor-destroying activities. Mediates de-O-acetylation of N-acetyl-4-O-acetylneuraminic acid, which is probably the receptor determinant recognized by the virus on the surface of erythrocytes and susceptible cells. This receptor-destroying activity is important for virus release as it probably helps preventing self-aggregation and ensures the efficient spread of the progeny virus from cell to cell. May serve as a secondary viral attachment protein for initiating infection, the spike protein being the major one. May become a target for both the humoral and the cellular branches of the immune system. The polypeptide is Hemagglutinin-esterase (Murine coronavirus (strain S) (MHV-S)).